The primary structure comprises 279 residues: Tetra-spanning protein 1 (279 aa).

2 consecutive transmembrane segments (helical) span residues 25–45 (VWFS…LQAI) and 50–70 (APPF…AIVL). N77 is a glycosylation site (N-linked (GlcNAc...) asparagine). Residues 100–122 (YFILALSMLIDRPILFSLAPYAI) traverse the membrane as a helical segment. The N-linked (GlcNAc...) asparagine glycan is linked to N143. Residues 172 to 192 (MQLVASLETFLLFRLFFGVFL) traverse the membrane as a helical segment. The segment at 260–279 (VGTAQSRPTASSSTTAPSST) is disordered. A compositionally biased stretch (low complexity) spans 262–279 (TAQSRPTASSSTTAPSST).

It belongs to the PER33/POM33 family. As to quaternary structure, interacts with RTN1 and YOP1.

It is found in the golgi apparatus membrane. It localises to the endoplasmic reticulum membrane. Its subcellular location is the nucleus membrane. Functionally, required for the correct positioning of the cellular division plane by delimiting the actomyosin ring assembly at the cell equator. The sequence is that of Tetra-spanning protein 1 (tts1) from Schizosaccharomyces pombe (strain 972 / ATCC 24843) (Fission yeast).